We begin with the raw amino-acid sequence, 280 residues long: Phosphonoacetaldehyde hydrolase (280 aa).

The Nucleophile role is filled by Asp20. Mg(2+)-binding residues include Asp20 and Ala22. The active-site Schiff-base intermediate with substrate is Lys61. Asp194 provides a ligand contact to Mg(2+).

It belongs to the HAD-like hydrolase superfamily. PhnX family. Homodimer. Mg(2+) is required as a cofactor.

The catalysed reaction is phosphonoacetaldehyde + H2O = acetaldehyde + phosphate + H(+). Functionally, involved in phosphonate degradation. The sequence is that of Phosphonoacetaldehyde hydrolase from Nitratidesulfovibrio vulgaris (strain DSM 19637 / Miyazaki F) (Desulfovibrio vulgaris).